A 290-amino-acid polypeptide reads, in one-letter code: Nucleoid occlusion protein (290 aa).

A DNA-binding region (H-T-H motif) is located at residues 153 to 172 (EALAQRLGKGQSTVANKLRL).

The protein belongs to the ParB family.

It is found in the cytoplasm. The protein localises to the nucleoid. Its function is as follows. Effects nucleoid occlusion by binding relatively nonspecifically to DNA and preventing the assembly of the division machinery in the vicinity of the nucleoid, especially under conditions that disturb the cell cycle. It helps to coordinate cell division and chromosome segregation by preventing the formation of the Z ring through the nucleoid, which would cause chromosome breakage. This chain is Nucleoid occlusion protein, found in Bacillus mycoides (strain KBAB4) (Bacillus weihenstephanensis).